The following is a 156-amino-acid chain: MPRKGPAPKRPLVNDPVYGSQLVTQLVNKVLLKGKKSLAERIVYGALENAREKTGTDPVITLKRALDNVKPALEVRSRRVGGATYQVPVEVRPDRSTTLALRWLVSFSRQRREKTMVERLANEILDASNGLGASVKRREDTHKMAEANRAFAHYRW.

It belongs to the universal ribosomal protein uS7 family. Part of the 30S ribosomal subunit. Contacts proteins S9 and S11.

Its function is as follows. One of the primary rRNA binding proteins, it binds directly to 16S rRNA where it nucleates assembly of the head domain of the 30S subunit. Is located at the subunit interface close to the decoding center, probably blocks exit of the E-site tRNA. This Mycobacterium avium (strain 104) protein is Small ribosomal subunit protein uS7.